Consider the following 430-residue polypeptide: Tol-Pal system protein TolB (430 aa).

An N-terminal signal peptide occupies residues 1 to 21; the sequence is MKQALRVAFGFLILWASVLHA.

It belongs to the TolB family. The Tol-Pal system is composed of five core proteins: the inner membrane proteins TolA, TolQ and TolR, the periplasmic protein TolB and the outer membrane protein Pal. They form a network linking the inner and outer membranes and the peptidoglycan layer.

The protein localises to the periplasm. In terms of biological role, part of the Tol-Pal system, which plays a role in outer membrane invagination during cell division and is important for maintaining outer membrane integrity. TolB occupies a key intermediary position in the Tol-Pal system because it communicates directly with both membrane-embedded components, Pal in the outer membrane and TolA in the inner membrane. The polypeptide is Tol-Pal system protein TolB (Shigella boydii serotype 4 (strain Sb227)).